The sequence spans 130 residues: Small ribosomal subunit protein uS11 (130 aa).

Belongs to the universal ribosomal protein uS11 family. Part of the 30S ribosomal subunit. Interacts with proteins S7 and S18. Binds to IF-3.

Its function is as follows. Located on the platform of the 30S subunit, it bridges several disparate RNA helices of the 16S rRNA. Forms part of the Shine-Dalgarno cleft in the 70S ribosome. The sequence is that of Small ribosomal subunit protein uS11 from Syntrophobacter fumaroxidans (strain DSM 10017 / MPOB).